Reading from the N-terminus, the 94-residue chain is MRLKPLGDRVVVKVIQAEEVTKGGVILPGTAKEKPQQGEVVAVGTGQYIDGKKVELEVKVGDRVIFSKYAGTEVKLDGEEYLLLRESDILAIIE.

This sequence belongs to the GroES chaperonin family. Heptamer of 7 subunits arranged in a ring. Interacts with the chaperonin GroEL.

The protein localises to the cytoplasm. Together with the chaperonin GroEL, plays an essential role in assisting protein folding. The GroEL-GroES system forms a nano-cage that allows encapsulation of the non-native substrate proteins and provides a physical environment optimized to promote and accelerate protein folding. GroES binds to the apical surface of the GroEL ring, thereby capping the opening of the GroEL channel. The chain is Co-chaperonin GroES from Thermoanaerobacter pseudethanolicus (strain ATCC 33223 / 39E) (Clostridium thermohydrosulfuricum).